The sequence spans 457 residues: Phosphoglucosamine mutase (457 aa).

S103 functions as the Phosphoserine intermediate in the catalytic mechanism. Residues S103, D244, D246, and D248 each contribute to the Mg(2+) site. Residue S103 is modified to Phosphoserine.

This sequence belongs to the phosphohexose mutase family. Mg(2+) is required as a cofactor. Post-translationally, activated by phosphorylation.

The enzyme catalyses alpha-D-glucosamine 1-phosphate = D-glucosamine 6-phosphate. Its function is as follows. Catalyzes the conversion of glucosamine-6-phosphate to glucosamine-1-phosphate. The sequence is that of Phosphoglucosamine mutase from Granulibacter bethesdensis (strain ATCC BAA-1260 / CGDNIH1).